Reading from the N-terminus, the 327-residue chain is Deoxyribonuclease (327 aa).

A signal peptide (or 35) is located at residues 1–24 (MSKKLRNFLVRIIVAAFASFAVMA). A disordered region spans residues 299 to 327 (DSTTDEIENSVDDSEEIVYNDTTTEEEEN).

It carries out the reaction Endonucleolytic cleavage to 5'-phosphodinucleotide and 5'-phosphooligonucleotide end-products.. Functionally, may have a role in S.equisimilis virulence. The sequence is that of Deoxyribonuclease (sdc) from Streptococcus dysgalactiae subsp. equisimilis (Streptococcus equisimilis).